A 440-amino-acid polypeptide reads, in one-letter code: Tyrosine--tRNA ligase (440 aa).

Residue Tyr46 participates in L-tyrosine binding. A 'HIGH' region motif is present at residues Pro51–Asn60. Residues Tyr181 and Gln185 each coordinate L-tyrosine. Residues Lys241–Ser245 carry the 'KMSKS' region motif. Lys244 contacts ATP. Residues Asp373 to Asn439 enclose the S4 RNA-binding domain.

Belongs to the class-I aminoacyl-tRNA synthetase family. TyrS type 1 subfamily. In terms of assembly, homodimer.

It localises to the cytoplasm. It carries out the reaction tRNA(Tyr) + L-tyrosine + ATP = L-tyrosyl-tRNA(Tyr) + AMP + diphosphate + H(+). Functionally, catalyzes the attachment of tyrosine to tRNA(Tyr) in a two-step reaction: tyrosine is first activated by ATP to form Tyr-AMP and then transferred to the acceptor end of tRNA(Tyr). The chain is Tyrosine--tRNA ligase from Bifidobacterium longum subsp. infantis (strain ATCC 15697 / DSM 20088 / JCM 1222 / NCTC 11817 / S12).